The sequence spans 474 residues: Alkylcitrate dehydratase phiI (474 aa).

Belongs to the PrpD family. Monomer.

The enzyme catalyses (4E,11E)-2-hydroxytrideca-4,11-dien-1,2,3-tricarboxylate + 2 H(+) = [4-(deca-1,8-diyl)-2,5-dioxo-2,5-dihydro-3-furanyl]acetate + 2 H2O. The protein operates within secondary metabolite biosynthesis. In terms of biological role, alkylcitrate dehydratasee; part of the gene cluster that mediates the biosynthesis of the antihypercholesterolemic agents phomoidrides which are dimeric anhydrides. Within the pathway, the alkylcitrate synthase (ACS) tstiJ and the alkylcitrate dehydratase (ACDH) tstI produce the decarboxylated monomeric anhydrides by coupling the C12-fatty acyl product from phiA with oxalacetic acid. The pathway begins with the highly reducing polyketide synthase tstA that catalyzes the formation of a C12-fatty acyl-ACP, starting from one acetate and 5 malonate units. The hydrolase tstM is involved in the release of the C12-fatty acyl chain from phiA. The alkylcitrate synthase (ACS) tstJ and the alkylcitrate dehydratase (ACDH) tstI then give rise to decarboxylated monomeric anhydrides by coupling the C12-fatty acyl chain with oxalacetic acid. The cyclase tstC is responsible for the dimerization of the monomeric anhydrides which leads to the production of prephomoidride that contains the characteristic bicyclo[4.3.1]deca-1,6-diene system of phomoidrides. Iterative oxidation catalyzed by the alpha-ketoglutarate-dependent dioxygenase tstK produced then phomoidride A. Finally, the methyltransferase tstE converts phomoidride A to phomoidride B via an acetalization reaction. The phosphatidylethanolamine-binding protein tstB and tstN are not essential for dimerization and their functions have still to be determined. This chain is Alkylcitrate dehydratase phiI, found in Talaromyces stipitatus (strain ATCC 10500 / CBS 375.48 / QM 6759 / NRRL 1006) (Penicillium stipitatum).